Here is a 363-residue protein sequence, read N- to C-terminus: Protein RecA (363 aa).

An ATP-binding site is contributed by 79 to 86 (GPESSGKT).

This sequence belongs to the RecA family.

The protein resides in the cytoplasm. Its function is as follows. Can catalyze the hydrolysis of ATP in the presence of single-stranded DNA, the ATP-dependent uptake of single-stranded DNA by duplex DNA, and the ATP-dependent hybridization of homologous single-stranded DNAs. It interacts with LexA causing its activation and leading to its autocatalytic cleavage. This is Protein RecA from Borrelia duttonii (strain Ly).